Here is a 1486-residue protein sequence, read N- to C-terminus: MFSFVDSRTLVLFAATQVILLAVVRCQDEEDVLDTGSCVQHGQRYSDKDVWKPEPCQICVCDTGTVLCDDIICEESKDCPNAEIPFGECCPICPTEQSSTSSGQGVLKGQKGEPGDIKDVLGPRGPPGPQGPSGEQGSRGERGDKGEKGAPGPRGRDGEPGTPGNPGPVGPPGPPGLGGNFAAQMTGGFDEKAGGAQMGVMQGPMGPMGPRGPPGPTGAPGPQGFQGNPGEPGEPGAGGPMGPRGPPGPSGKPGDDGEAGKPGKSGERGPPGPQGARGFPGTPGLPGVKGHRGYPGLDGAKGEAGAAGAKGEGGATGEAGSPGPMGPRGLPGERGRPGSSGAAGARGNDGLPGPAGPPGPVGPAGAPGFPGAPGSKGEAGPTGARGPEGAQGPRGESGTPGSPGPAGASGNPGTDGIPGAKGSSGGPGIAGAPGFPGPRGPPGPQGATGPLGPKGQTGDPGVAGFKGEQGPKGEIGSAGPQGAPGPAGEEGKRGARGEPGAAGPNGPPGERGAPGNRGFPGQDGLAGPKGAPGERGVPGLGGPKGGNGDPGRPGEPGLPGARGLTGRPGDAGPQGKVGPSGASGEDGRPGPPGPQGARGQPGVMGFPGPKGANGEPGKAGEKGLVGAPGLRGLPGKDGETGSQGPNGPAGPAGERGEQGPPGPSGFQGLPGPPGSPGEGGKPGDQGVPGEAGAPGLVGPRGERGFPGERGSSGPQGLQGPRGLPGTPGTDGPKGASGPSGPNGAQGPPGLQGMPGERGAAGISGPKGDRGDTGEKGPEGASGKDGSRGLTGPIGPPGPAGPNGEKGESGPSGPPGIVGARGAPGDRGENGPPGPAGFAGPPGADGQSGLKGDQGESGQKGDAGAPGPQGPSGAPGPQGPTGVFGPKGARGAQGPAGATGFPGAAGRVGTPGPNGNPGPPGPPGSAGKEGPKGVRGDAGPPGRAGDPGLQGAAGAPGEKGEPGEDGPSGPDGPPGPQGLSGQRGIVGLPGQRGERGFPGLPGPSGEPGKQGGPGSSGDRGPPGPVGPPGLTGPSGEPGREGNPGSDGPPGRDGATGIKGDRGETGPLGAPGAPGAPGAPGSVGPTGKQGDRGESGPQGPLGPSGPAGARGLAGPQGPRGDKGEAGEAGERGQKGHRGFTGLQGLPGPPGSAGDQGATGPAGPAGPRGPPGPVGPSGKDGSNGISGPIGPPGPRGRSGETGPSGPPGQPGPPGPPGPPGPGIDMSAFAGLSQPEKGPDPMRYMRADQASNSLPVDVEATLKSLNNQIENIRSPDGTKKNPARTCRDLKLCHPEWKSGDYWIDPNQGCTVDAIKVFCDMETGETCVYPNPSKIPKKNWWSAKGKEKKHIWFGETINGGFQFSYGDDSSAPNTANIQMTFLRLLSTDASQNITYHCKNSIAFMDEASGNLKKAVLLQGSNDVEIRAEGNSRFTYNALEDGCKKHTGKWSKTVIEYRTQKTSRLPIVDIAPMDIGGADQEFGVDIGPVCFL.

Positions 1 to 26 are cleaved as a signal peptide; sequence MFSFVDSRTLVLFAATQVILLAVVRC. Positions 27 to 183 are cleaved as a propeptide — N-terminal propeptide; that stretch reads QDEEDVLDTG…PPGLGGNFAA (157 aa). The 59-residue stretch at 36 to 94 folds into the VWFC domain; it reads GSCVQHGQRYSDKDVWKPEPCQICVCDTGTVLCDDIICEESKDCPNAEIPFGECCPICP. The interval 100 to 1241 is disordered; it reads TSSGQGVLKG…EKGPDPMRYM (1142 aa). Composition is skewed to basic and acidic residues over residues 110 to 121 and 138 to 159; these read QKGEPGDIKDVL and SRGE…RDGE. Residues 163 to 175 are compositionally biased toward pro residues; sequence PGNPGPVGPPGPP. The span at 194–205 shows a compositional bias: low complexity; the sequence is GGAQMGVMQGPM. A triple-helical region region spans residues 203–1216; it reads GPMGPMGPRG…PGPPGPPGPP (1014 aa). Positions 210–219 are enriched in pro residues; that stretch reads PRGPPGPTGA. Residues 220 to 231 are compositionally biased toward low complexity; it reads PGPQGFQGNPGE. Positions 233-242 are enriched in gly residues; that stretch reads GEPGAGGPMG. A compositionally biased stretch (basic and acidic residues) spans 253 to 267; the sequence is PGDDGEAGKPGKSGE. A compositionally biased stretch (gly residues) spans 308–317; sequence GAKGEGGATG. 4 stretches are compositionally biased toward low complexity: residues 318–330, 337–346, 363–373, and 393–421; these read EAGS…PRGL, PGSSGAAGAR, PAGAPGFPGAP, and PRGE…PGAK. Over residues 422 to 431 the composition is skewed to gly residues; that stretch reads GSSGGPGIAG. Over residues 435–444 the composition is skewed to pro residues; that stretch reads FPGPRGPPGP. Composition is skewed to low complexity over residues 478–487 and 498–517; these read AGPQGAPGPA and EPGA…PGNR. The segment covering 536–551 has biased composition (gly residues); it reads GVPGLGGPKGGNGDPG. A 4-hydroxyproline mark is found at P661 and P670. P672 bears the 3-hydroxyproline mark. A 4-hydroxyproline mark is found at P673 and P676. Residues 708–732 are compositionally biased toward low complexity; that stretch reads ERGSSGPQGLQGPRGLPGTPGTDGP. The span at 766–777 shows a compositional bias: basic and acidic residues; sequence KGDRGDTGEKGP. Low complexity predominate over residues 891–904; it reads AQGPAGATGFPGAA. 4-hydroxyproline occurs at positions 910, 916, and 922. Residues 913–922 show a composition bias toward pro residues; that stretch reads NGNPGPPGPP. Positions 936–955 are enriched in low complexity; sequence DAGPPGRAGDPGLQGAAGAP. Positions 1007–1016 are enriched in gly residues; the sequence is GKQGGPGSSG. The segment covering 1102-1116 has biased composition (low complexity); the sequence is SGPAGARGLAGPQGP. A compositionally biased stretch (basic and acidic residues) spans 1117–1131; that stretch reads RGDKGEAGEAGERGQ. Position 1146 is a 3-hydroxyproline (P1146). The segment covering 1150–1159 has biased composition (low complexity); sequence AGDQGATGPA. Residue P1188 is modified to 3-hydroxyproline. 4-hydroxyproline is present on P1189. A compositionally biased stretch (pro residues) spans 1201–1218; sequence SGPPGQPGPPGPPGPPGP. P1203 bears the 3-hydroxyproline mark. 2 positions are modified to 4-hydroxyproline: P1204 and P1207. Position 1209 is a 3-hydroxyproline (P1209). P1210 and P1213 each carry 4-hydroxyproline. P1215 is modified (3-hydroxyproline). The residue at position 1216 (P1216) is a 4-hydroxyproline. A nonhelical region (C-terminal) region spans residues 1217–1243; sequence GPGIDMSAFAGLSQPEKGPDPMRYMRA. The propeptide at 1244–1486 is C-terminal propeptide; sequence DQASNSLPVD…GVDIGPVCFL (243 aa). Residues 1252–1486 enclose the Fibrillar collagen NC1 domain; that stretch reads VDVEATLKSL…GVDIGPVCFL (235 aa). Disulfide bonds link C1282/C1314, C1322/C1484, and C1392/C1437. Ca(2+) contacts are provided by D1300, N1302, Q1303, C1305, and D1308. N-linked (GlcNAc...) asparagine glycosylation occurs at N1387.

Belongs to the fibrillar collagen family. Homotrimers of alpha 1(II) chains. Post-translationally, contains mostly 4-hydroxyproline. Prolines at the third position of the tripeptide repeating unit (G-X-P) are 4-hydroxylated in some or all of the chains. Contains 3-hydroxyproline at a few sites. This modification occurs on the first proline residue in the sequence motif Gly-Pro-Hyp, where Hyp is 4-hydroxyproline. In terms of processing, lysine residues at the third position of the tripeptide repeating unit (G-X-Y) are 5-hydroxylated in some or all of the chains. Post-translationally, O-glycosylated on hydroxylated lysine residues. The O-linked glycan consists of a Glc-Gal disaccharide.

The protein localises to the secreted. It is found in the extracellular space. It localises to the extracellular matrix. Functionally, type II collagen is specific for cartilaginous tissues. It is essential for the normal embryonic development of the skeleton, for linear growth and for the ability of cartilage to resist compressive forces. The polypeptide is Collagen alpha-1(II) chain (Xenopus laevis (African clawed frog)).